The primary structure comprises 261 residues: Carbonic anhydrase 1 (261 aa).

At alanine 2 the chain carries N-acetylalanine. In terms of domain architecture, Alpha-carbonic anhydrase spans 4–261 (PDWGYDGENG…LNGRTVKASF (258 aa)). Catalysis depends on histidine 65, which acts as the Proton donor/acceptor. Residues histidine 95, histidine 97, and histidine 120 each coordinate Zn(2+). Residues threonine 200 and 200 to 201 (TH) each bind substrate.

The protein belongs to the alpha-carbonic anhydrase family. The cofactor is Zn(2+).

It localises to the cytoplasm. It catalyses the reaction hydrogencarbonate + H(+) = CO2 + H2O. It carries out the reaction urea = cyanamide + H2O. Its activity is regulated as follows. Inhibited by acetazolamide. Catalyzes the reversible hydration of carbon dioxide. Can hydrate cyanamide to urea. The chain is Carbonic anhydrase 1 (CA1) from Bos taurus (Bovine).